A 248-amino-acid chain; its full sequence is Homeobox protein Hox-A4 (248 aa).

A disordered region spans residues 23–107; that stretch reads YQQSGYIPNP…PDGGAGANAS (85 aa). Basic and acidic residues predominate over residues 35–51; that stretch reads YYERPKDTGFPHHDEPS. Residues 128–133 carry the Antp-type hexapeptide motif; sequence VYPWMK. A DNA-binding region (homeobox) is located at residues 149-208; that stretch reads PKRSRTAYTRQQALELEKEFHFNRYLTRRRRVEIAHTMCLSERQVKIWFQNRRMKWKKEH. The segment at 207 to 248 is disordered; sequence EHKLPNTKIRSSSSASSSASGAQQQQIKTGQQLVPTPCTAGL. Residues 217-238 are compositionally biased toward low complexity; sequence SSSSASSSASGAQQQQIKTGQQ.

Belongs to the Antp homeobox family. Deformed subfamily.

The protein resides in the nucleus. In terms of biological role, sequence-specific transcription factor which is part of a developmental regulatory system that provides cells with specific positional identities on the anterior-posterior axis. The polypeptide is Homeobox protein Hox-A4 (hoxa4) (Morone saxatilis (Striped bass)).